The chain runs to 246 residues: 1-(5-phosphoribosyl)-5-[(5-phosphoribosylamino)methylideneamino] imidazole-4-carboxamide isomerase (246 aa).

The Proton acceptor role is filled by Asp8. The active-site Proton donor is the Asp131.

It belongs to the HisA/HisF family.

Its subcellular location is the cytoplasm. The enzyme catalyses 1-(5-phospho-beta-D-ribosyl)-5-[(5-phospho-beta-D-ribosylamino)methylideneamino]imidazole-4-carboxamide = 5-[(5-phospho-1-deoxy-D-ribulos-1-ylimino)methylamino]-1-(5-phospho-beta-D-ribosyl)imidazole-4-carboxamide. The protein operates within amino-acid biosynthesis; L-histidine biosynthesis; L-histidine from 5-phospho-alpha-D-ribose 1-diphosphate: step 4/9. This Polaromonas naphthalenivorans (strain CJ2) protein is 1-(5-phosphoribosyl)-5-[(5-phosphoribosylamino)methylideneamino] imidazole-4-carboxamide isomerase.